The following is a 92-amino-acid chain: Small ribosomal subunit protein uS19 (92 aa).

The protein belongs to the universal ribosomal protein uS19 family.

Protein S19 forms a complex with S13 that binds strongly to the 16S ribosomal RNA. The sequence is that of Small ribosomal subunit protein uS19 from Corynebacterium jeikeium (strain K411).